The following is a 388-amino-acid chain: Succinate--CoA ligase [ADP-forming] subunit beta (388 aa).

The 236-residue stretch at 9 to 244 folds into the ATP-grasp domain; sequence KQLFARYGLP…QSQEDPREAQ (236 aa). ATP-binding positions include K46, 53–55, E99, T102, and E107; that span reads GRG. Residues N199 and D213 each contribute to the Mg(2+) site. Substrate is bound by residues N264 and 321 to 323; that span reads GIV.

The protein belongs to the succinate/malate CoA ligase beta subunit family. In terms of assembly, heterotetramer of two alpha and two beta subunits. Requires Mg(2+) as cofactor.

It carries out the reaction succinate + ATP + CoA = succinyl-CoA + ADP + phosphate. The catalysed reaction is GTP + succinate + CoA = succinyl-CoA + GDP + phosphate. The protein operates within carbohydrate metabolism; tricarboxylic acid cycle; succinate from succinyl-CoA (ligase route): step 1/1. Functionally, succinyl-CoA synthetase functions in the citric acid cycle (TCA), coupling the hydrolysis of succinyl-CoA to the synthesis of either ATP or GTP and thus represents the only step of substrate-level phosphorylation in the TCA. The beta subunit provides nucleotide specificity of the enzyme and binds the substrate succinate, while the binding sites for coenzyme A and phosphate are found in the alpha subunit. The polypeptide is Succinate--CoA ligase [ADP-forming] subunit beta (Klebsiella pneumoniae (strain 342)).